A 367-amino-acid polypeptide reads, in one-letter code: Forkhead box protein I2-B (367 aa).

The segment covering 31-40 has biased composition (low complexity); sequence QQQNQQLPQR. Residues 31–51 are disordered; it reads QQQNQQLPQRPAAPPAPGYGL. The fork-head DNA-binding region spans 124 to 218; that stretch reads RPPYSYSSLI…DNGNFRRKRK (95 aa). The segment at 224–254 is disordered; it reads VGAGFDEESNEDKKPLALKSLGPDSPGGASV.

It is found in the nucleus. Possible transcriptional activator. This is Forkhead box protein I2-B (foxi2-b) from Xenopus laevis (African clawed frog).